A 162-amino-acid polypeptide reads, in one-letter code: Globin CTT-VI (162 aa).

Positions 1–15 (MKFLVLALCIAAASA) are cleaved as a signal peptide. The Globin domain maps to 17–161 (VLTTEQADLV…TYAMLFSAMD (145 aa)). The heme b site is built by His-75 and His-110.

Belongs to the globin family. As to quaternary structure, homodimer.

The chain is Globin CTT-VI (CTT-6) from Chironomus thummi thummi (Midge).